The chain runs to 474 residues: Pleckstrin homology domain-containing family S member 1 (474 aa).

Residues 20 to 135 form the PH domain; that stretch reads EVHKRDYFIK…WVSFMTPYCQ (116 aa). Disordered stretches follow at residues 232–251, 272–321, and 449–474; these read IAGP…DQGF, STSA…DDQK, and RDLP…AAGE. Polar residues predominate over residues 238 to 248; the sequence is SGDSIESNSPD. Residues 449 to 458 show a composition bias toward basic and acidic residues; it reads RDLPELERTP.

The chain is Pleckstrin homology domain-containing family S member 1 from Mus musculus (Mouse).